We begin with the raw amino-acid sequence, 119 residues long: Large ribosomal subunit protein uL18 (119 aa).

It belongs to the universal ribosomal protein uL18 family. Part of the 50S ribosomal subunit; part of the 5S rRNA/L5/L18/L25 subcomplex. Contacts the 5S and 23S rRNAs.

This is one of the proteins that bind and probably mediate the attachment of the 5S RNA into the large ribosomal subunit, where it forms part of the central protuberance. This chain is Large ribosomal subunit protein uL18, found in Ruegeria pomeroyi (strain ATCC 700808 / DSM 15171 / DSS-3) (Silicibacter pomeroyi).